The primary structure comprises 130 residues: Small ribosomal subunit protein uS11 (130 aa).

The protein belongs to the universal ribosomal protein uS11 family. As to quaternary structure, part of the 30S ribosomal subunit. Interacts with proteins S7 and S18. Binds to IF-3.

Functionally, located on the platform of the 30S subunit, it bridges several disparate RNA helices of the 16S rRNA. Forms part of the Shine-Dalgarno cleft in the 70S ribosome. This Dehalococcoides mccartyi (strain ATCC BAA-2266 / KCTC 15142 / 195) (Dehalococcoides ethenogenes (strain 195)) protein is Small ribosomal subunit protein uS11.